The primary structure comprises 622 residues: Protein translocase subunit SecD (622 aa).

6 consecutive transmembrane segments (helical) span residues 6–26, 460–480, 485–505, 512–532, 559–579, and 584–604; these read FKIG…YPTV, AGLR…IFYY, MIAD…LAAF, PGIA…VLIF, AIFD…SFGV, and GFAV…IVIT.

The protein belongs to the SecD/SecF family. SecD subfamily. As to quaternary structure, forms a complex with SecF. Part of the essential Sec protein translocation apparatus which comprises SecA, SecYEG and auxiliary proteins SecDF. Other proteins may also be involved.

The protein localises to the cell inner membrane. Functionally, part of the Sec protein translocase complex. Interacts with the SecYEG preprotein conducting channel. SecDF uses the proton motive force (PMF) to complete protein translocation after the ATP-dependent function of SecA. This is Protein translocase subunit SecD from Rhodothermus marinus (strain ATCC 43812 / DSM 4252 / R-10) (Rhodothermus obamensis).